The sequence spans 372 residues: Forkhead box protein F1-B (372 aa).

Residues 1-51 form a disordered region; the sequence is MTAEIQQPPSQPPAQSSPMSAATDKHGGQPSAMESASCATKTKKTNAGIRR. Over residues 13 to 22 the composition is skewed to low complexity; sequence PAQSSPMSAA. Residues 54–148 constitute a DNA-binding region (fork-head); it reads KPPYSYIALI…EEGSFRRRPR (95 aa).

As to expression, at the late gastrula stage, expressed in the presumptive ventrolateral mesoderm. During neurulation and tailbud stages, expressed in the lateral plate mesoderm and in the neural crest-derived structures of the head and branchial arches. During tailbud stages, expressed in the pronephros and pronephros ducts and in cells that migrate from the dorsolateral plate to the ventral region of the embryo (with the notable exception of the heart). These cells may represent hematopoietic or endothelial progenitor cells.

Its subcellular location is the nucleus. Its function is as follows. Probable transcription factor. Required for smooth muscle (visceral mesoderm) differentiation during gut development. Also required for normal proliferation of the lateral plate mesoderm. Acts as a downstream mediator of bmp4-signaling. The polypeptide is Forkhead box protein F1-B (foxf1-b) (Xenopus laevis (African clawed frog)).